The following is a 209-amino-acid chain: Ubiquitin-conjugating enzyme E2 S (209 aa).

One can recognise a UBC core domain in the interval 14 to 160; sequence QTIRQVMREL…ARMMTEIHAQ (147 aa). Cys98 functions as the Glycyl thioester intermediate in the catalytic mechanism. The interval 164 to 209 is disordered; that stretch reads CGVGASGDAKDDDGPSTKKHAGLDKKLQDKKKEKLLKEKKRMLKRL. The segment covering 171-199 has biased composition (basic and acidic residues); the sequence is DAKDDDGPSTKKHAGLDKKLQDKKKEKLL. Basic residues predominate over residues 200 to 209; it reads KEKKRMLKRL.

Belongs to the ubiquitin-conjugating enzyme family.

It carries out the reaction S-ubiquitinyl-[E1 ubiquitin-activating enzyme]-L-cysteine + [E2 ubiquitin-conjugating enzyme]-L-cysteine = [E1 ubiquitin-activating enzyme]-L-cysteine + S-ubiquitinyl-[E2 ubiquitin-conjugating enzyme]-L-cysteine.. Its pathway is protein modification; protein ubiquitination. In terms of biological role, catalyzes the covalent attachment of ubiquitin to other proteins. Acts as an essential factor of the anaphase promoting complex/cyclosome (APC/C), a cell cycle-regulated ubiquitin ligase that controls progression through mitosis. Acts by specifically elongating polyubiquitin chains initiated by the E2 enzyme vih/UbcH10 on APC/C substrates, enhancing the degradation of APC/C substrates by the proteasome and promoting mitotic exit. This is Ubiquitin-conjugating enzyme E2 S from Drosophila yakuba (Fruit fly).